The following is a 243-amino-acid chain: 1-(5-phosphoribosyl)-5-[(5-phosphoribosylamino)methylideneamino] imidazole-4-carboxamide isomerase (243 aa).

The Proton acceptor role is filled by Asp-8. Catalysis depends on Asp-130, which acts as the Proton donor.

The protein belongs to the HisA/HisF family.

The protein resides in the cytoplasm. It carries out the reaction 1-(5-phospho-beta-D-ribosyl)-5-[(5-phospho-beta-D-ribosylamino)methylideneamino]imidazole-4-carboxamide = 5-[(5-phospho-1-deoxy-D-ribulos-1-ylimino)methylamino]-1-(5-phospho-beta-D-ribosyl)imidazole-4-carboxamide. Its pathway is amino-acid biosynthesis; L-histidine biosynthesis; L-histidine from 5-phospho-alpha-D-ribose 1-diphosphate: step 4/9. The sequence is that of 1-(5-phosphoribosyl)-5-[(5-phosphoribosylamino)methylideneamino] imidazole-4-carboxamide isomerase from Ruthia magnifica subsp. Calyptogena magnifica.